Consider the following 373-residue polypeptide: SH3 domain-binding protein 5-like (373 aa).

Positions 1–36 (MEGKEGPPCEVRLPTPGAEREGPVHPELGAFGESAS) are disordered. Coiled coils occupy residues 35-98 (ASDA…ESAR) and 170-258 (WQEM…KLRY). 2 disordered regions span residues 274-308 (ARRT…PADT) and 332-373 (DLTD…SVSL). A compositionally biased stretch (basic and acidic residues) spans 332-360 (DLTDVTSLDGRETGAVESGGSRERGEDRG).

The protein belongs to the SH3BP5 family.

Functionally, functions as a guanine nucleotide exchange factor (GEF) for rab11a. This Xenopus laevis (African clawed frog) protein is SH3 domain-binding protein 5-like (sh3bp5l).